The chain runs to 154 residues: Prefoldin subunit alpha (154 aa).

Polar residues predominate over residues 92–102 (DNAVESLSTKQ). The interval 92 to 154 (DNAVESLSTK…MQDQQPEDNE (63 aa)) is disordered. Over residues 103–114 (DALDNRIESLRD) the composition is skewed to basic and acidic residues. Positions 128-148 (QQAQQMQQQMQQQQMQQMQDQ) are enriched in low complexity.

It belongs to the prefoldin subunit alpha family. In terms of assembly, heterohexamer of two alpha and four beta subunits.

The protein resides in the cytoplasm. Molecular chaperone capable of stabilizing a range of proteins. Seems to fulfill an ATP-independent, HSP70-like function in archaeal de novo protein folding. The polypeptide is Prefoldin subunit alpha (Haloquadratum walsbyi (strain DSM 16790 / HBSQ001)).